Here is an 81-residue protein sequence, read N- to C-terminus: Apolipoprotein C-I, acidic form (81 aa).

Residues 1 to 24 (MRLFLSLLVVVLSMVLKGPTPAQG) form the signal peptide.

Belongs to the apolipoprotein C1 family.

Its subcellular location is the secreted. The protein is Apolipoprotein C-I, acidic form (APOC1A) of Macaca fascicularis (Crab-eating macaque).